Reading from the N-terminus, the 345-residue chain is Protoheme IX farnesyltransferase (345 aa).

A run of 9 helical transmembrane segments spans residues 33-53 (VMSL…TPIH), 54-74 (PLLG…SGAL), 105-125 (ATLG…AINW), 126-146 (LAAG…TMWL), 154-174 (IVIG…AATG), 182-202 (LMVL…SLYI), 226-246 (QILL…FTGL), 247-267 (GGWL…TLAV), and 315-335 (ILYL…GLPI).

The protein belongs to the UbiA prenyltransferase family. Protoheme IX farnesyltransferase subfamily.

It is found in the cell inner membrane. It carries out the reaction heme b + (2E,6E)-farnesyl diphosphate + H2O = Fe(II)-heme o + diphosphate. It functions in the pathway porphyrin-containing compound metabolism; heme O biosynthesis; heme O from protoheme: step 1/1. Converts heme B (protoheme IX) to heme O by substitution of the vinyl group on carbon 2 of heme B porphyrin ring with a hydroxyethyl farnesyl side group. The chain is Protoheme IX farnesyltransferase from Caulobacter sp. (strain K31).